The primary structure comprises 680 residues: HEAT repeat-containing protein 3 (680 aa).

Residues 1–11 (MGKSRTKRFKR) show a composition bias toward basic residues. A disordered region spans residues 1–39 (MGKSRTKRFKRPQFSPTGDCQAEAAAAANGTGGEEDDGP). Serine 15 bears the Phosphoserine mark. The span at 18-29 (GDCQAEAAAAAN) shows a compositional bias: low complexity. 2 HEAT repeats span residues 38-69 (GPAA…VQQR) and 74-110 (GLAR…SACG). Position 144 is a phosphoserine (serine 144). At threonine 340 the chain carries Phosphothreonine.

This sequence belongs to the nuclear import and ribosome assembly adapter family. In terms of assembly, component of a hexameric 5S RNP precursor complex, composed of 5S RNA, RRS1, RPF2/BXDC1, RPL5, RPL11 and HEATR3; this complex acts as a precursor for ribosome assembly.

Its function is as follows. Plays a role in ribosome biogenesis and in nuclear import of the 60S ribosomal protein L5/large ribosomal subunit protein uL18 (RPL5). Required for proper erythrocyte maturation. The chain is HEAT repeat-containing protein 3 (HEATR3) from Homo sapiens (Human).